Here is a 479-residue protein sequence, read N- to C-terminus: Anaerobic nitric oxide reductase flavorubredoxin (479 aa).

The segment at 30-210 is zinc metallo-hydrolase; that stretch reads LRGSSYNSYL…PFSRLVTPKI (181 aa). Residues His-79, Glu-81, Asp-83, His-147, Asp-166, and His-227 each coordinate Fe cation. The 140-residue stretch at 254–393 folds into the Flavodoxin-like domain; that stretch reads ITIFYDTMSN…LCRQHGRDIA (140 aa). FMN contacts are provided by residues 260 to 264 and 342 to 369; these read TMSNN and AFGS…EMSL. Residues 423–474 enclose the Rubredoxin-like domain; sequence GPKMQCSVCQWIYDPALGEPLQDVAPGTPWSDVPDNFLCPECSLGKDVFDVL. Positions 428, 431, 461, and 464 each coordinate Fe cation.

The protein in the N-terminal section; belongs to the zinc metallo-hydrolase group 3 family. Homotetramer. Fe cation serves as cofactor. FMN is required as a cofactor.

Its subcellular location is the cytoplasm. It participates in nitrogen metabolism; nitric oxide reduction. Its function is as follows. Anaerobic nitric oxide reductase; uses NADH to detoxify nitric oxide (NO), protecting several 4Fe-4S NO-sensitive enzymes. Has at least 2 reductase partners, only one of which (NorW, flavorubredoxin reductase) has been identified. NO probably binds to the di-iron center; electrons enter from the NorW at rubredoxin and are transferred sequentially to the FMN center and the di-iron center. Also able to function as an aerobic oxygen reductase. This chain is Anaerobic nitric oxide reductase flavorubredoxin, found in Salmonella arizonae (strain ATCC BAA-731 / CDC346-86 / RSK2980).